A 218-amino-acid chain; its full sequence is uncharacterized protein (218 aa).

Residues 11–31 (AAGLFPLALMLSGCISYALVS) traverse the membrane as a helical segment.

Its subcellular location is the membrane. This is an uncharacterized protein from Escherichia coli (strain K12).